The sequence spans 495 residues: Probable cytochrome P450 508C1 (495 aa).

Residues 3–21 (LLNSLLLLFLIYLIHSFYI) traverse the membrane as a helical segment. Position 442 (C442) interacts with heme.

The protein belongs to the cytochrome P450 family. It depends on heme as a cofactor.

The protein resides in the membrane. This chain is Probable cytochrome P450 508C1 (cyp508C1), found in Dictyostelium discoideum (Social amoeba).